Here is a 66-residue protein sequence, read N- to C-terminus: Large ribosomal subunit protein bL33c (66 aa).

Belongs to the bacterial ribosomal protein bL33 family.

It is found in the plastid. It localises to the chloroplast. The protein is Large ribosomal subunit protein bL33c of Lepidium virginicum (Virginia pepperweed).